We begin with the raw amino-acid sequence, 304 residues long: MDSSSFSFSHLDRLEAESIYILREVVAEFRNPVLLYSVGKDSSVLLHLLLKAFAPAPPPIPLLHVDTRWKFREMIAFRDRRVAETGVQLRVHINLEGVAQEINPITHGAAVHTDIMKTQGLRQALEQGQFDAAIGGARRDEEKSRAKERVFSFRNAHHRWDPKNQRPELWNVYNARIHPGESVRVFPLSNWTELDVWLYIYREQIPVVSLYFAAPRPVVERDGMLILVDDERLPLHPGEVSKLRWVRFRTLGCYPLTGAVESRAATLEDIIAEMLVTPFSERQGRLIDYAPGASMESKKIEGYF.

It belongs to the PAPS reductase family. CysD subfamily. As to quaternary structure, heterodimer composed of CysD, the smaller subunit, and CysNC.

It carries out the reaction sulfate + ATP + H(+) = adenosine 5'-phosphosulfate + diphosphate. It participates in sulfur metabolism; hydrogen sulfide biosynthesis; sulfite from sulfate: step 1/3. Functionally, with CysN forms the ATP sulfurylase (ATPS) that catalyzes the adenylation of sulfate producing adenosine 5'-phosphosulfate (APS) and diphosphate, the first enzymatic step in sulfur assimilation pathway. APS synthesis involves the formation of a high-energy phosphoric-sulfuric acid anhydride bond driven by GTP hydrolysis by CysN coupled to ATP hydrolysis by CysD. This Xylella fastidiosa (strain Temecula1 / ATCC 700964) protein is Sulfate adenylyltransferase subunit 2.